The primary structure comprises 113 residues: U11-theraphotoxin-Hhn1a (113 aa).

The N-terminal stretch at 1-21 (MNTVRVTFLLVFVLAVSLGQA) is a signal peptide. Residues 22-74 (DKDENRMEMQEKTEQGKSYLDFAENLLLQKLEELEAKPLEEDSEESRNSRQKR) constitute a propeptide that is removed on maturation. Residues 57–69 (AKPLEEDSEESRN) are compositionally biased toward basic and acidic residues. A disordered region spans residues 57-83 (AKPLEEDSEESRNSRQKRCIGEGVPCD). Cystine bridges form between Cys75/Cys90, Cys82/Cys95, and Cys89/Cys110.

This sequence belongs to the neurotoxin 14 (magi-1) family. 01 (HNTX-16) subfamily. As to expression, expressed by the venom gland.

It localises to the secreted. Its function is as follows. Probable ion channel inhibitor. This is U11-theraphotoxin-Hhn1a from Cyriopagopus hainanus (Chinese bird spider).